The following is a 606-amino-acid chain: NADH-ubiquinone oxidoreductase chain 5 (606 aa).

The next 16 membrane-spanning stretches (helical) occupy residues 4 to 24 (FSSL…SSIL), 38 to 58 (NIIS…IHSG), 87 to 107 (MIFV…SLWY), 117 to 137 (FFKY…ANNL), 140 to 160 (LFIG…WWYG), 171 to 191 (AILY…WFLF), 211 to 233 (LPLL…HPWL), 241 to 261 (TPVS…FLLI), 273 to 293 (IQSL…ICAL), 301 to 320 (IIAF…IGIN), 325 to 347 (AFLH…GSII), 366 to 386 (MPFT…MPFL), 413 to 433 (LIAT…ALLG), 457 to 477 (LLIG…PTTI), 488 to 508 (LTAL…SLIT), and 584 to 604 (IKLY…LFNL).

It belongs to the complex I subunit 5 family. As to quaternary structure, core subunit of respiratory chain NADH dehydrogenase (Complex I) which is composed of 45 different subunits.

It is found in the mitochondrion inner membrane. It carries out the reaction a ubiquinone + NADH + 5 H(+)(in) = a ubiquinol + NAD(+) + 4 H(+)(out). Functionally, core subunit of the mitochondrial membrane respiratory chain NADH dehydrogenase (Complex I) which catalyzes electron transfer from NADH through the respiratory chain, using ubiquinone as an electron acceptor. Essential for the catalytic activity and assembly of complex I. The chain is NADH-ubiquinone oxidoreductase chain 5 (MT-ND5) from Equus asinus (Donkey).